Here is a 1781-residue protein sequence, read N- to C-terminus: Atrochrysone carboxylic acid synthase (1781 aa).

Residues 15–253 (TRDLFRRLHV…KHVALPVYAG (239 aa)) form an N-terminal acylcarrier protein transacylase domain (SAT) region. A Ketosynthase family 3 (KS3) domain is found at 390–823 (QSKIAIVGMA…GGNTSVVVEE (434 aa)). Residues cysteine 563, histidine 698, and histidine 741 each act as for beta-ketoacyl synthase activity in the active site. The interval 925-1244 (FAFTGQGASH…SLGLLHCAGL (320 aa)) is malonyl-CoA:ACP transacylase (MAT) domain. The interval 1312–1631 (TSTVQQIIEE…RVLLNRFFSA (320 aa)) is product template (PT) domain. An N-terminal hotdog fold region spans residues 1316–1451 (QQIIEETFSD…ADIVYGLPTD (136 aa)). Positions 1316–1626 (QQIIEETFSD…FRRYPRVLLN (311 aa)) constitute a PKS/mFAS DH domain. The Proton acceptor; for dehydratase activity role is filled by histidine 1348. The interval 1478–1626 (IANRLSHNMA…FRRYPRVLLN (149 aa)) is C-terminal hotdog fold. Catalysis depends on aspartate 1537, which acts as the Proton donor; for dehydratase activity. Positions 1633 to 1653 (DSDTSKHTSATDVSPPKKVVQ) are disordered. A Carrier domain is found at 1703 to 1780 (VDSDSTASKA…DLKAWLMEYY (78 aa)). An O-(pantetheine 4'-phosphoryl)serine modification is found at serine 1740.

The catalysed reaction is holo-[ACP] + 8 malonyl-CoA + 8 H(+) = atrochrysone carboxyl-[ACP] + 8 CO2 + 8 CoA + 2 H2O. Its pathway is secondary metabolite biosynthesis. Atrochrysone carboxylic acid synthase; part of the gene cluster that mediates the biosynthesis of the dimeric xanthones cryptosporioptides. The pathway begins with the synthesis of atrochrysone thioester by the polyketide synthase dmx-nrPKS. The atrochrysone carboxyl ACP thioesterase dmxR1 then breaks the thioester bond and releases the atrochrysone carboxylic acid from dmx-nrPKS. Atrochrysone carboxylic acid is decarboxylated by the decarboxylase dmxR15, and oxidized by the anthrone oxygenase dmxR16 to yield emodin. Emodin is then reduced to emodin hydroquinone by the oxidoreductase dmxR7. A-ring reduction by the short chain dehydrogenase dmxR18, dehydration by the scytalone dehydratase-like protein dmxR17 and probable spontaneous re-oxidation, results in overall deoxygenation to chrysophanol. Baeyer-Villiger oxidation by the Baeyer-Villiger monooxygenase (BVMO) dmxR6 then yields monodictylactone in equilibrium with monodictyphenone. In the case of the cryptosporioptides biosynthesis, monodictylactone is reduced at C-12 to an alcohol (by the short chain dehydrogenases dmxR12 or dmxR8) and hydroxylated at C-5 by dmxR9, yielding the electron-rich aromatic which could eliminate H(2)O to form the ortho-quinonemethide, followed by tautomerisation to paraquinone and complete the formal reduction to produce the 10-methylgroup. Conjugate addition of C-4a-OH to the resulting paraquinone by the monooxygenase dmxR10 then gives cyclohexadienone, which is then reduced at C-5 by the short chain dehydrogenase dmxR3 to give the dihydroxanthone. The 6,7-epoxide in the cryptosporioptides could be introduced by the cytochrome P450 monooxygenase dmxL3. The highly reducing PKS dmxL2 manufactures butyrate, which is further carboxylated by dmxL1 to form ethylmalonate. It is not yet clear whether the carboxylation occurs while the butyrate is attached to the ACP of dmxL2, but this unusual fungal metabolite could then be esterified to O-5 by the O-acetyltransferase dmxR13. Finally, dimerization performed by dmxR5 gives the observed dimers cryptosporioptides A, B and C as the final products of the pathway. The sequence is that of Atrochrysone carboxylic acid synthase from Cryptosporiopsis sp. (strain 8999).